Consider the following 142-residue polypeptide: Large ribosomal subunit protein uL11 (142 aa).

This sequence belongs to the universal ribosomal protein uL11 family. Part of the ribosomal stalk of the 50S ribosomal subunit. Interacts with L10 and the large rRNA to form the base of the stalk. L10 forms an elongated spine to which L12 dimers bind in a sequential fashion forming a multimeric L10(L12)X complex. Post-translationally, one or more lysine residues are methylated.

In terms of biological role, forms part of the ribosomal stalk which helps the ribosome interact with GTP-bound translation factors. This chain is Large ribosomal subunit protein uL11, found in Erwinia tasmaniensis (strain DSM 17950 / CFBP 7177 / CIP 109463 / NCPPB 4357 / Et1/99).